A 339-amino-acid chain; its full sequence is DNA-directed RNA polymerase subunit alpha (339 aa).

The segment at 1 to 233 (MVREEVAGST…DLFLPFLHAE (233 aa)) is alpha N-terminal domain (alpha-NTD). The interval 266–339 (GIPLNCIFID…MDLLKNKLSF (74 aa)) is alpha C-terminal domain (alpha-CTD).

This sequence belongs to the RNA polymerase alpha chain family. In terms of assembly, in plastids the minimal PEP RNA polymerase catalytic core is composed of four subunits: alpha, beta, beta', and beta''. When a (nuclear-encoded) sigma factor is associated with the core the holoenzyme is formed, which can initiate transcription.

Its subcellular location is the plastid. The protein localises to the chloroplast. The enzyme catalyses RNA(n) + a ribonucleoside 5'-triphosphate = RNA(n+1) + diphosphate. Its function is as follows. DNA-dependent RNA polymerase catalyzes the transcription of DNA into RNA using the four ribonucleoside triphosphates as substrates. The chain is DNA-directed RNA polymerase subunit alpha from Agrostis stolonifera (Creeping bentgrass).